Here is a 286-residue protein sequence, read N- to C-terminus: Beta-lactamase TEM-12 (286 aa).

An N-terminal signal peptide occupies residues 1–23 (MSIQHFRVALIPFFAAFCLPVFA). The Acyl-ester intermediate role is filled by Ser68. A disulfide bridge links Cys75 with Cys121. Glu166 serves as the catalytic Proton acceptor. 232–234 (KSG) is a substrate binding site.

Belongs to the class-A beta-lactamase family.

The catalysed reaction is a beta-lactam + H2O = a substituted beta-amino acid. Its function is as follows. TEM-type are the most prevalent beta-lactamases in enterobacteria; they hydrolyze the beta-lactam bond in susceptible beta-lactam antibiotics, thus conferring resistance to penicillins and cephalosporins such as ceftazidime. The protein is Beta-lactamase TEM-12 (blaT-12b) of Klebsiella oxytoca.